Reading from the N-terminus, the 179-residue chain is MIIKNEWLIVGFITSCHGINGQLKVKSLSDFEERFLKPGMRWLQKESEHPSKIELISGFKQPGKEIFIVKFKGINTRNHAEQLKKCKLLVKSDKLPKLKKEEFHLLELIDLEVKTLENDELKIIGKVINLENEKNNLLIIELFKNQKKVLIPFVKEIVPLVDIKNNFLIINPPNGLLEL.

Positions lysine 100–leucine 176 constitute a PRC barrel domain.

The protein belongs to the RimM family. Binds ribosomal protein uS19.

It is found in the cytoplasm. Functionally, an accessory protein needed during the final step in the assembly of 30S ribosomal subunit, possibly for assembly of the head region. Essential for efficient processing of 16S rRNA. May be needed both before and after RbfA during the maturation of 16S rRNA. It has affinity for free ribosomal 30S subunits but not for 70S ribosomes. The sequence is that of Ribosome maturation factor RimM from Prochlorococcus marinus (strain AS9601).